The chain runs to 408 residues: Snake venom 5'-nucleotidase (408 aa).

The Zn(2+) site is built by His54 and His77. N-linked (GlcNAc...) asparagine glycosylation is found at Asn167 and Asn181. Disulfide bonds link Cys187/Cys192 and Cys199/Cys221. An AMP-binding site is contributed by Arg188. AMP contacts are provided by Asn224, Arg229, and Phe252. A disulfide bridge connects residues Cys311 and Cys314. AMP contacts are provided by Phe335 and Asp341. 2 consecutive propeptides (removed in mature form) follow at residues 385-388 (DGTL) and 385-408 (DGTL…FFIL).

This sequence belongs to the 5'-nucleotidase family. As to quaternary structure, homodimer. Post-translationally, venom 5'-nucleotidases (or a part thereof) may be released into the venom via exosome-like vesicles. They may be attached via a GPI anchor to the membrane of these vesicles. Soluble forms of 5'-nucleotidase might be released by cleavage of the ectodomain in the exosome-like vesicles or venom gland cells. In terms of tissue distribution, expressed by the venom gland.

The protein localises to the membrane. It carries out the reaction a ribonucleoside 5'-phosphate + H2O = a ribonucleoside + phosphate. The catalysed reaction is AMP + H2O = adenosine + phosphate. It catalyses the reaction GMP + H2O = guanosine + phosphate. The enzyme catalyses ADP + H2O = AMP + phosphate + H(+). Is potently inhibited by metal ions Fe(3+), Cu(2+) and Zn(2+). Is enhanced by Mn(2+). Ca(2+) and Mg(2+) have no effect. In terms of biological role, hydrolyzes nucleotides into nucleosides. Prefers AMP as the substrate but also cleaves GMP and ADP. Does not affect AMP, cAMP and cGMP. Inhibits ADP- and collagen-induced platelet aggregation. Snake venom 5'-nucleotidases are widely distributed among venomous snake taxa, but there is a lack of information about their biological activities. They have been shown to inhibit platelet aggregation. This effect may be due to the liberation of inhibitory AMP or adenosine by its action on ADP released upon initiation of aggregation. Venom 5'-nucleotidases are also known to synergistically act in vivo with other toxins like ADPases, phospholipases, and disintegrins to exert a more pronounced anti-coagulant effect. The sequence is that of Snake venom 5'-nucleotidase from Macrovipera lebetinus (Levantine viper).